Reading from the N-terminus, the 395-residue chain is GA-binding protein subunit beta-1 (395 aa).

Residue serine 2 is modified to N-acetylserine. 2 ANK repeats span residues 5–34 (DLGKKLLEAARAGQDDEVRILMANGAPFTT) and 37–66 (LGTSPLHLAAQYGHYSTTEVLLRAGVSRDA). Lysine 69 is modified (N6-acetyllysine). ANK repeat units lie at residues 70–99 (VDRTPLHMAASEGHASIVEVLLKHGADVNA), 103–132 (LKMTALHWATEHNHQEVVELLIKYGADVHT), and 136–166 (FCKTAFDISIDNGNEDLAEILQIAMQNQINT). Residues 258-327 (DGAIQQVVSS…ETVISEEPPA (70 aa)) form a transcription activation and HCFC1 interaction region. N6-acetyllysine occurs at positions 352 and 381.

As to quaternary structure, heterotetramer of two alpha and two beta subunits. Interacts with HCFC1, causing repression of transcriptional activity. Post-translationally, acetylated by EP300/p300. Deacetylated by SIRT7, promoting heterotetramerization and activity.

It is found in the nucleus. Its function is as follows. Transcription factor capable of interacting with purine rich repeats (GA repeats). Acts as a master regulator of nuclear-encoded mitochondrial genes. In terms of biological role, (Microbial infection) Necessary for the expression of the Adenovirus E4 gene. This chain is GA-binding protein subunit beta-1 (GABPB1), found in Homo sapiens (Human).